A 1295-amino-acid polypeptide reads, in one-letter code: Phosphoribosylformylglycinamidine synthase (1295 aa).

Residues 305–327 (WPGAATGSGGEIRDEGATGRGAK) form a disordered region. Residues 307–318 (GAATGSGGEIRD) and alanine 678 each bind ATP. Glutamate 718, asparagine 722, and aspartate 884 together coordinate Mg(2+). Serine 886 contributes to the ATP binding site. The region spanning 1042–1295 (VAVLREQGVN…IFRNARKQLG (254 aa)) is the Glutamine amidotransferase type-1 domain. The active-site Nucleophile is cysteine 1135. Catalysis depends on residues histidine 1260 and glutamate 1262.

In the N-terminal section; belongs to the FGAMS family. In terms of assembly, monomer.

It localises to the cytoplasm. It carries out the reaction N(2)-formyl-N(1)-(5-phospho-beta-D-ribosyl)glycinamide + L-glutamine + ATP + H2O = 2-formamido-N(1)-(5-O-phospho-beta-D-ribosyl)acetamidine + L-glutamate + ADP + phosphate + H(+). It participates in purine metabolism; IMP biosynthesis via de novo pathway; 5-amino-1-(5-phospho-D-ribosyl)imidazole from N(2)-formyl-N(1)-(5-phospho-D-ribosyl)glycinamide: step 1/2. In terms of biological role, phosphoribosylformylglycinamidine synthase involved in the purines biosynthetic pathway. Catalyzes the ATP-dependent conversion of formylglycinamide ribonucleotide (FGAR) and glutamine to yield formylglycinamidine ribonucleotide (FGAM) and glutamate. In Escherichia coli (strain UTI89 / UPEC), this protein is Phosphoribosylformylglycinamidine synthase.